The chain runs to 253 residues: Tropomyosin-1 (253 aa).

Positions 7–253 form a coiled coil; the sequence is VNKLVRLQGK…MDDVGDDDTQ (247 aa).

The protein belongs to the tropomyosin family. Homodimer.

Tropomyosin, in association with the troponin complex, plays a central role in the calcium dependent regulation of muscle contraction. The protein is Tropomyosin-1 (TROP1) of Hydra vulgaris (Hydra).